We begin with the raw amino-acid sequence, 374 residues long: Ribosomal RNA large subunit methyltransferase G (374 aa).

It belongs to the methyltransferase superfamily. RlmG family.

It localises to the cytoplasm. The catalysed reaction is guanosine(1835) in 23S rRNA + S-adenosyl-L-methionine = N(2)-methylguanosine(1835) in 23S rRNA + S-adenosyl-L-homocysteine + H(+). In terms of biological role, specifically methylates the guanine in position 1835 (m2G1835) of 23S rRNA. The chain is Ribosomal RNA large subunit methyltransferase G from Pseudomonas putida (strain W619).